The chain runs to 92 residues: Small ribosomal subunit protein uS19 (92 aa).

This sequence belongs to the universal ribosomal protein uS19 family. Part of the 30S ribosomal subunit.

Protein S19 forms a complex with S13 that binds strongly to the 16S ribosomal RNA. This Bacillus subtilis (strain 168) protein is Small ribosomal subunit protein uS19 (rpsS).